The following is a 297-amino-acid chain: Aspartate carbamoyltransferase catalytic subunit (297 aa).

2 residues coordinate carbamoyl phosphate: arginine 51 and threonine 52. Lysine 79 provides a ligand contact to L-aspartate. The carbamoyl phosphate site is built by arginine 101, histidine 129, and glutamine 132. The L-aspartate site is built by arginine 162 and arginine 216. Glycine 257 and proline 258 together coordinate carbamoyl phosphate.

Belongs to the aspartate/ornithine carbamoyltransferase superfamily. ATCase family. As to quaternary structure, heterododecamer (2C3:3R2) of six catalytic PyrB chains organized as two trimers (C3), and six regulatory PyrI chains organized as three dimers (R2).

It catalyses the reaction carbamoyl phosphate + L-aspartate = N-carbamoyl-L-aspartate + phosphate + H(+). Its pathway is pyrimidine metabolism; UMP biosynthesis via de novo pathway; (S)-dihydroorotate from bicarbonate: step 2/3. Its function is as follows. Catalyzes the condensation of carbamoyl phosphate and aspartate to form carbamoyl aspartate and inorganic phosphate, the committed step in the de novo pyrimidine nucleotide biosynthesis pathway. This is Aspartate carbamoyltransferase catalytic subunit from Myxococcus xanthus (strain DK1622).